The chain runs to 321 residues: Flagellin C (321 aa).

The protein belongs to the bacterial flagellin family.

The protein localises to the secreted. Its subcellular location is the bacterial flagellum. Its function is as follows. Flagellin is the subunit protein which polymerizes to form the filaments of bacterial flagella. The sequence is that of Flagellin C (flaC) from Rhizobium meliloti (strain 1021) (Ensifer meliloti).